We begin with the raw amino-acid sequence, 441 residues long: Protein SPMIP7 (441 aa).

In terms of tissue distribution, testis specific. Expressed at the spermatid stage.

Essential for normal spermatogenesis. The sequence is that of Protein SPMIP7 (Spmip7) from Mus musculus (Mouse).